The chain runs to 316 residues: Ribosomal RNA small subunit methyltransferase H (316 aa).

S-adenosyl-L-methionine is bound by residues alanine 35 to histidine 37, aspartate 55, phenylalanine 84, aspartate 105, and glutamine 112.

This sequence belongs to the methyltransferase superfamily. RsmH family.

Its subcellular location is the cytoplasm. It carries out the reaction cytidine(1402) in 16S rRNA + S-adenosyl-L-methionine = N(4)-methylcytidine(1402) in 16S rRNA + S-adenosyl-L-homocysteine + H(+). Functionally, specifically methylates the N4 position of cytidine in position 1402 (C1402) of 16S rRNA. The polypeptide is Ribosomal RNA small subunit methyltransferase H (Streptococcus pneumoniae serotype 4 (strain ATCC BAA-334 / TIGR4)).